A 198-amino-acid polypeptide reads, in one-letter code: ATP-dependent Clp protease proteolytic subunit (198 aa).

Ser-98 serves as the catalytic Nucleophile. His-123 is an active-site residue.

It belongs to the peptidase S14 family. As to quaternary structure, fourteen ClpP subunits assemble into 2 heptameric rings which stack back to back to give a disk-like structure with a central cavity, resembling the structure of eukaryotic proteasomes.

It is found in the cytoplasm. It catalyses the reaction Hydrolysis of proteins to small peptides in the presence of ATP and magnesium. alpha-casein is the usual test substrate. In the absence of ATP, only oligopeptides shorter than five residues are hydrolyzed (such as succinyl-Leu-Tyr-|-NHMec, and Leu-Tyr-Leu-|-Tyr-Trp, in which cleavage of the -Tyr-|-Leu- and -Tyr-|-Trp bonds also occurs).. Functionally, cleaves peptides in various proteins in a process that requires ATP hydrolysis. Has a chymotrypsin-like activity. Plays a major role in the degradation of misfolded proteins. In Bacillus velezensis (strain DSM 23117 / BGSC 10A6 / LMG 26770 / FZB42) (Bacillus amyloliquefaciens subsp. plantarum), this protein is ATP-dependent Clp protease proteolytic subunit.